The chain runs to 300 residues: Oxidoreductase BOA1 (300 aa).

It belongs to the NmrA-type oxidoreductase family. Isoflavone reductase subfamily.

It functions in the pathway polyketide biosynthesis. Functionally, oxidoreductase; part of the gene cluster A that mediates the biosynthesis of botcinic acid and its botcinin derivatives, acetate-derived polyketides that contribute to virulence when combined with the sesquiterpene botrydial. Botcinic acid and its derivatives have been shown to induce chlorosis and necrosis during host plant infection, but also have antifungal activities. Two polyketide synthases, BOA6 and BOA9, are involved in the biosynthesis of botcinins. BOA6 mediates the formation of the per-methylated tetraketide core by condensation of four units of malonyl-CoA with one unit of acetyl-CoA, which would be methylated in activated methylene groups to yield a bicyclic acid intermediate that could then either be converted to botrylactone derivatives or lose the starter acetate unit through a retro-Claisen type C-C bond cleavage to yield botcinin derivatives. The second polyketide synthase, BOA9, is probably required for the biosynthesis of the tetraketide side chain of botcinins. The methyltransferase (MT) domain within BOA6 is probably responsible for the incorporation of four methyl groups. The trans-enoyl reductase BOA5 might take over the enoyl reductase function of BOA6 that misses an ER domain. The monooxygenases BOA2, BOA3 and BOA4 might be involved in further hydroxylations at C4, C5 and C8, whereas BOA7, close to BOA9, could potentially be involved in the hydroxylation at C4 in the side chain of botcinins. The polypeptide is Oxidoreductase BOA1 (Botryotinia fuckeliana (strain B05.10) (Noble rot fungus)).